Here is a 166-residue protein sequence, read N- to C-terminus: Lipoprotein signal peptidase (166 aa).

4 helical membrane passes run 10-30 (GGAL…DQLT), 32-52 (IAVL…FFNL), 71-91 (WQRW…CYLL), and 100-120 (FSLS…DRLI). Active-site residues include D126 and D144. The chain crosses the membrane as a helical span at residues 135–155 (WHWPAFNLADSAITVGAVLLI).

Belongs to the peptidase A8 family.

Its subcellular location is the cell inner membrane. The catalysed reaction is Release of signal peptides from bacterial membrane prolipoproteins. Hydrolyzes -Xaa-Yaa-Zaa-|-(S,diacylglyceryl)Cys-, in which Xaa is hydrophobic (preferably Leu), and Yaa (Ala or Ser) and Zaa (Gly or Ala) have small, neutral side chains.. The protein operates within protein modification; lipoprotein biosynthesis (signal peptide cleavage). This protein specifically catalyzes the removal of signal peptides from prolipoproteins. This Burkholderia mallei (strain ATCC 23344) protein is Lipoprotein signal peptidase.